The sequence spans 498 residues: ATP synthase subunit beta, chloroplastic (498 aa).

An ATP-binding site is contributed by 172–179; it reads GGAGVGKT.

Belongs to the ATPase alpha/beta chains family. As to quaternary structure, F-type ATPases have 2 components, CF(1) - the catalytic core - and CF(0) - the membrane proton channel. CF(1) has five subunits: alpha(3), beta(3), gamma(1), delta(1), epsilon(1). CF(0) has four main subunits: a(1), b(1), b'(1) and c(9-12).

The protein resides in the plastid. It is found in the chloroplast thylakoid membrane. It carries out the reaction ATP + H2O + 4 H(+)(in) = ADP + phosphate + 5 H(+)(out). Its function is as follows. Produces ATP from ADP in the presence of a proton gradient across the membrane. The catalytic sites are hosted primarily by the beta subunits. In Canella winterana (Wild cinnamon), this protein is ATP synthase subunit beta, chloroplastic.